Reading from the N-terminus, the 574-residue chain is Membrane protein insertase YidC (574 aa).

The next 6 helical transmembrane spans lie at 6–26, 356–376, 380–400, 447–467, 489–509, and 525–545; these read VFLI…WGKD, FSIM…LHSF, WGWA…PLSA, GGCL…WVLV, PYFI…KLTP, and PLVF…YWVV.

It belongs to the OXA1/ALB3/YidC family. Type 1 subfamily. As to quaternary structure, interacts with the Sec translocase complex via SecD. Specifically interacts with transmembrane segments of nascent integral membrane proteins during membrane integration.

Its subcellular location is the cell inner membrane. Functionally, required for the insertion and/or proper folding and/or complex formation of integral membrane proteins into the membrane. Involved in integration of membrane proteins that insert both dependently and independently of the Sec translocase complex, as well as at least some lipoproteins. Aids folding of multispanning membrane proteins. The sequence is that of Membrane protein insertase YidC from Xanthomonas axonopodis pv. citri (strain 306).